The following is a 327-amino-acid chain: Phenylalanine--tRNA ligase alpha subunit (327 aa).

Glutamate 252 provides a ligand contact to Mg(2+).

It belongs to the class-II aminoacyl-tRNA synthetase family. Phe-tRNA synthetase alpha subunit type 1 subfamily. Tetramer of two alpha and two beta subunits. Requires Mg(2+) as cofactor.

Its subcellular location is the cytoplasm. It carries out the reaction tRNA(Phe) + L-phenylalanine + ATP = L-phenylalanyl-tRNA(Phe) + AMP + diphosphate + H(+). This chain is Phenylalanine--tRNA ligase alpha subunit, found in Salmonella agona (strain SL483).